Consider the following 407-residue polypeptide: Aminomethyltransferase, mitochondrial (407 aa).

The transit peptide at 1–29 directs the protein to the mitochondrion; that stretch reads MRGGLWQLGQSITRRLGQSDKKTIARRCY. Positions 234, 265, and 403 each coordinate substrate.

Belongs to the GcvT family. The glycine cleavage system is composed of four proteins: P, T, L and H.

It localises to the mitochondrion. The enzyme catalyses N(6)-[(R)-S(8)-aminomethyldihydrolipoyl]-L-lysyl-[protein] + (6S)-5,6,7,8-tetrahydrofolate = N(6)-[(R)-dihydrolipoyl]-L-lysyl-[protein] + (6R)-5,10-methylene-5,6,7,8-tetrahydrofolate + NH4(+). The glycine cleavage system catalyzes the degradation of glycine. This chain is Aminomethyltransferase, mitochondrial (GDCST), found in Flaveria pringlei.